A 2243-amino-acid polypeptide reads, in one-letter code: Zinc finger FYVE domain-containing protein 26 homolog (2243 aa).

Disordered stretches follow at residues 386–416 (SQRKGEDGENDEEDDEQYVDDDVASPPRPTA) and 514–556 (KKKA…GKAS). Residues 393 to 408 (GENDEEDDEQYVDDDV) show a composition bias toward acidic residues. Y403 bears the Phosphotyrosine mark. Basic and acidic residues predominate over residues 517–528 (ASSDDESRERSN). Residues 534 to 543 (NRRKARRQRR) are compositionally biased toward basic residues. The LRR 1 repeat unit spans residues 617 to 644 (KKIIETFHLEHSQLNRELHFMEQQQLVK). Residue S1424 is modified to Phosphoserine. Residues 1444 to 1500 (DEEASHCMCCRRAAFTMLMRRHHCRRCGRVVCYACSTHRIRIPELYDELEVRICNDC) form an FYVE-type zinc finger. Positions 1450, 1453, 1467, 1470, 1475, 1478, 1497, and 1500 each coordinate Zn(2+). The tract at residues 1505–1534 (TPAKDQGDGTSSERSAISGQVSKSSGRSDS) is disordered. A compositionally biased stretch (polar residues) spans 1512-1534 (DGTSSERSAISGQVSKSSGRSDS). The stretch at 1887–1912 (YPQLANGGLNVLMDELQQLDDAQFTA) is one LRR 2 repeat.

Belongs to the ZFYVE26 family.

Phosphatidylinositol 3-phosphate (PtdIns[3]P)-binding protein. Involved in autophagy. This is Zinc finger FYVE domain-containing protein 26 homolog from Drosophila melanogaster (Fruit fly).